We begin with the raw amino-acid sequence, 1020 residues long: Tetrathionate reductase subunit A (1020 aa).

Residues 1 to 33 (MANLTRRQWLKVGLAVGGMVTFGLSYRDVAKRA) constitute a signal peptide (tat-type signal). Positions 71–154 (QTIAMTQCFG…TLLESLYSPL (84 aa)) constitute a 4Fe-4S Mo/W bis-MGD-type domain. Residues C78, C81, C85, and C140 each contribute to the [4Fe-4S] cluster site.

This sequence belongs to the prokaryotic molybdopterin-containing oxidoreductase family. In terms of assembly, probably composed of three subunits: TtrA, TtrB and TtrC. Requires [4Fe-4S] cluster as cofactor. The cofactor is Mo-bis(molybdopterin guanine dinucleotide). In terms of processing, predicted to be exported by the Tat system. The position of the signal peptide cleavage has not been experimentally proven.

It localises to the periplasm. The protein resides in the cell inner membrane. Functionally, part of a membrane-bound tetrathionate reductase that catalyzes the reduction of tetrathionate to thiosulfate. TtrA is the catalytic subunit. During mice infection, the ability to use tetrathionate as an electron acceptor is a growth advantage for S.typhimurium over the competing microbiota in the lumen of the inflamed gut. This is Tetrathionate reductase subunit A (ttrA) from Salmonella typhimurium (strain LT2 / SGSC1412 / ATCC 700720).